We begin with the raw amino-acid sequence, 574 residues long: K(+)/H(+) antiporter NhaP2 (574 aa).

A run of 13 helical transmembrane segments spans residues 6–26 (INSFFLIGALLAAVSVLLSPV), 34–54 (ILLIFLAVGILAGEDGPGGIL), 58–78 (YSTAYLVSNLALAIILLDGGM), 87–107 (VALWPALSLATFGVAITTSIT), 109–129 (VMAAWLFDLHWLQGLLVGAIV), 173–193 (IAILANVDAELSVSFMLISFI), 196–216 (FGLGIFLGLGGGWLLWKLVNL), 219–239 (LAEGLYSILVLSGGLMIYAAS), 242–262 (LGGSGILSIYLVGLFLGNKPT), 271–291 (VLDGMTWVSQIGMFLVLGLLL), 299–319 (IWLPGLALAFGMILFARPLAV), 335–355 (WFISWVGLRGAVPIILAVFPM), and 359–379 (LPGAQLYFNLAFFVVLVSLLV). In terms of domain architecture, RCK C-terminal spans 405–486 (SGVEIYPSSE…LEALSNLFSQ (82 aa)).

It belongs to the monovalent cation:proton antiporter 1 (CPA1) transporter (TC 2.A.36) family. NhaP2 subfamily.

Its subcellular location is the cell inner membrane. It carries out the reaction K(+)(in) + H(+)(out) = K(+)(out) + H(+)(in). Its function is as follows. K(+)/H(+) antiporter that extrudes potassium in exchange for external protons and maintains the internal concentration of potassium under toxic levels. This chain is K(+)/H(+) antiporter NhaP2, found in Shewanella sp. (strain ANA-3).